The following is a 463-amino-acid chain: Glutamate--tRNA ligase 1 (463 aa).

The 'HIGH' region signature appears at 10 to 20 (PSPTGYLHIGG). The 'KMSKS' region motif lies at 238–242 (KLSKR). Lysine 241 contributes to the ATP binding site.

It belongs to the class-I aminoacyl-tRNA synthetase family. Glutamate--tRNA ligase type 1 subfamily. As to quaternary structure, monomer.

It localises to the cytoplasm. It carries out the reaction tRNA(Glu) + L-glutamate + ATP = L-glutamyl-tRNA(Glu) + AMP + diphosphate. Functionally, catalyzes the attachment of glutamate to tRNA(Glu) in a two-step reaction: glutamate is first activated by ATP to form Glu-AMP and then transferred to the acceptor end of tRNA(Glu). The chain is Glutamate--tRNA ligase 1 from Helicobacter pylori (strain P12).